Here is a 75-residue protein sequence, read N- to C-terminus: Venom serine protease inhibitor BiVSPI (75 aa).

The N-terminal stretch at 1 to 20 (MSRILFVFLAVMAIFSTSFG) is a signal peptide. Disulfide bonds link cysteine 23–cysteine 55, cysteine 32–cysteine 51, cysteine 35–cysteine 47, cysteine 39–cysteine 75, and cysteine 57–cysteine 69. The TIL domain maps to 23–75 (CGLNEEFKSCGSCEPTCAKPRVTICTMECKIGCQCKSGYLRNGEGTCVLPEKC).

It belongs to the serine protease inhibitor-like (TIL domain-containing) family. May be O-glycosylated. Expressed by the venom gland (at protein level) and expressed in fat body.

It localises to the secreted. The protein resides in the target cell membrane. In terms of biological role, antimicrobial venom serine protease inhibitor. Exhibits inhibitory activity against chymotrypsin (IC(50)=19.56 nM, Ki=15.24 nM) and microbial serine proteases, such as subtilisin A (IC(50)=6.57 nM, Ki=6.83 nM) and proteinase K (IC(50)=7.11 nM, Ki=7.02 nM). Has not activity against trypsin, plasmin, tPA, thrombin, factor Xa or elastase. Binds and inhibits Gram-positive bacteria (B.subtilis (MIC=29.45 uM), B.thuringiensis (MIC=91.03 uM)) and the entomopathogenic fungus B.bassiana (MIC=30.09 uM) but not to E.coli. The sequence is that of Venom serine protease inhibitor BiVSPI from Bombus ignitus (Bumblebee).